Consider the following 269-residue polypeptide: 3-deoxy-manno-octulosonate cytidylyltransferase (269 aa).

It belongs to the KdsB family.

It is found in the cytoplasm. It catalyses the reaction 3-deoxy-alpha-D-manno-oct-2-ulosonate + CTP = CMP-3-deoxy-beta-D-manno-octulosonate + diphosphate. Its pathway is nucleotide-sugar biosynthesis; CMP-3-deoxy-D-manno-octulosonate biosynthesis; CMP-3-deoxy-D-manno-octulosonate from 3-deoxy-D-manno-octulosonate and CTP: step 1/1. It functions in the pathway bacterial outer membrane biogenesis; lipopolysaccharide biosynthesis. Functionally, activates KDO (a required 8-carbon sugar) for incorporation into bacterial lipopolysaccharide in Gram-negative bacteria. The polypeptide is 3-deoxy-manno-octulosonate cytidylyltransferase (Cupriavidus pinatubonensis (strain JMP 134 / LMG 1197) (Cupriavidus necator (strain JMP 134))).